Reading from the N-terminus, the 592-residue chain is Aspartate--tRNA ligase (592 aa).

Position 180 (Glu180) interacts with L-aspartate. An aspartate region spans residues 204–207 (QLFK). Arg226 contacts L-aspartate. Residues 226 to 228 (RDE) and Gln235 each bind ATP. His455 contacts L-aspartate. Glu489 contributes to the ATP binding site. Arg496 contacts L-aspartate. An ATP-binding site is contributed by 541 to 544 (GFDR).

This sequence belongs to the class-II aminoacyl-tRNA synthetase family. Type 1 subfamily. In terms of assembly, homodimer.

It is found in the cytoplasm. The catalysed reaction is tRNA(Asp) + L-aspartate + ATP = L-aspartyl-tRNA(Asp) + AMP + diphosphate. Its function is as follows. Catalyzes the attachment of L-aspartate to tRNA(Asp) in a two-step reaction: L-aspartate is first activated by ATP to form Asp-AMP and then transferred to the acceptor end of tRNA(Asp). This chain is Aspartate--tRNA ligase, found in Clostridium tetani (strain Massachusetts / E88).